The chain runs to 397 residues: Argininosuccinate synthase (397 aa).

Residue 8–16 coordinates ATP; that stretch reads AYSGGLDTS. Residues Tyr-86 and Ser-91 each contribute to the L-citrulline site. Gly-116 provides a ligand contact to ATP. Residues Thr-118, Asn-122, and Asp-123 each contribute to the L-aspartate site. Asn-122 is an L-citrulline binding site. Positions 126, 175, 184, 260, and 272 each coordinate L-citrulline.

Belongs to the argininosuccinate synthase family. Type 1 subfamily. Homotetramer.

It localises to the cytoplasm. The enzyme catalyses L-citrulline + L-aspartate + ATP = 2-(N(omega)-L-arginino)succinate + AMP + diphosphate + H(+). It functions in the pathway amino-acid biosynthesis; L-arginine biosynthesis; L-arginine from L-ornithine and carbamoyl phosphate: step 2/3. The protein is Argininosuccinate synthase of Clostridium botulinum (strain ATCC 19397 / Type A).